A 43-amino-acid chain; its full sequence is Protein PsbN (43 aa).

The helical transmembrane segment at 4–24 threads the bilayer; sequence ATVLSITFAVILIAITGLAVY.

It belongs to the PsbN family.

It is found in the cellular thylakoid membrane. May play a role in photosystem I and II biogenesis. The chain is Protein PsbN from Synechocystis sp. (strain ATCC 27184 / PCC 6803 / Kazusa).